The chain runs to 210 residues: 2-hydroxy-3-keto-5-methylthiopentenyl-1-phosphate phosphatase (210 aa).

Belongs to the HAD-like hydrolase superfamily. MtnX family.

The catalysed reaction is 2-hydroxy-5-methylsulfanyl-3-oxopent-1-enyl phosphate + H2O = 1,2-dihydroxy-5-(methylsulfanyl)pent-1-en-3-one + phosphate. Its pathway is amino-acid biosynthesis; L-methionine biosynthesis via salvage pathway; L-methionine from S-methyl-5-thio-alpha-D-ribose 1-phosphate: step 4/6. Its function is as follows. Dephosphorylates 2-hydroxy-3-keto-5-methylthiopentenyl-1-phosphate (HK-MTPenyl-1-P) yielding 1,2-dihydroxy-3-keto-5-methylthiopentene (DHK-MTPene). The polypeptide is 2-hydroxy-3-keto-5-methylthiopentenyl-1-phosphate phosphatase (Microcystis aeruginosa).